The chain runs to 295 residues: Pyridoxal 5'-phosphate synthase subunit PdxS (295 aa).

Position 25 (D25) interacts with D-ribose 5-phosphate. Residue K82 is the Schiff-base intermediate with D-ribose 5-phosphate of the active site. G154 is a binding site for D-ribose 5-phosphate. Residue R166 coordinates D-glyceraldehyde 3-phosphate. D-ribose 5-phosphate-binding positions include G215 and 236 to 237 (GS).

Belongs to the PdxS/SNZ family. In terms of assembly, in the presence of PdxT, forms a dodecamer of heterodimers.

It carries out the reaction aldehydo-D-ribose 5-phosphate + D-glyceraldehyde 3-phosphate + L-glutamine = pyridoxal 5'-phosphate + L-glutamate + phosphate + 3 H2O + H(+). The protein operates within cofactor biosynthesis; pyridoxal 5'-phosphate biosynthesis. Functionally, catalyzes the formation of pyridoxal 5'-phosphate from ribose 5-phosphate (RBP), glyceraldehyde 3-phosphate (G3P) and ammonia. The ammonia is provided by the PdxT subunit. Can also use ribulose 5-phosphate and dihydroxyacetone phosphate as substrates, resulting from enzyme-catalyzed isomerization of RBP and G3P, respectively. This is Pyridoxal 5'-phosphate synthase subunit PdxS from Bacillus mycoides (strain KBAB4) (Bacillus weihenstephanensis).